A 921-amino-acid chain; its full sequence is Isoleucine--tRNA ligase (921 aa).

The 'HIGH' region motif lies at 57 to 67 (PYANGNIHVGT). Glutamate 551 provides a ligand contact to L-isoleucyl-5'-AMP. The 'KMSKS' region signature appears at 592–596 (KMSKS). ATP is bound at residue lysine 595. Residues cysteine 885, cysteine 888, cysteine 905, and cysteine 908 each coordinate Zn(2+).

The protein belongs to the class-I aminoacyl-tRNA synthetase family. IleS type 1 subfamily. In terms of assembly, monomer. Zn(2+) is required as a cofactor.

It is found in the cytoplasm. It catalyses the reaction tRNA(Ile) + L-isoleucine + ATP = L-isoleucyl-tRNA(Ile) + AMP + diphosphate. Its function is as follows. Catalyzes the attachment of isoleucine to tRNA(Ile). As IleRS can inadvertently accommodate and process structurally similar amino acids such as valine, to avoid such errors it has two additional distinct tRNA(Ile)-dependent editing activities. One activity is designated as 'pretransfer' editing and involves the hydrolysis of activated Val-AMP. The other activity is designated 'posttransfer' editing and involves deacylation of mischarged Val-tRNA(Ile). This chain is Isoleucine--tRNA ligase, found in Kosmotoga olearia (strain ATCC BAA-1733 / DSM 21960 / TBF 19.5.1).